A 230-amino-acid polypeptide reads, in one-letter code: Ion-translocating oxidoreductase complex subunit E (230 aa).

The next 5 helical transmembrane spans lie at 39–59 (LGLG…VSLI), 69–89 (IPVF…LMNA), 93–113 (GLYL…IIIG), 125–145 (LPAA…LVVL), and 182–202 (SFLL…LIAL).

It belongs to the NqrDE/RnfAE family. As to quaternary structure, the complex is composed of six subunits: RnfA, RnfB, RnfC, RnfD, RnfE and RnfG.

It is found in the cell inner membrane. Part of a membrane-bound complex that couples electron transfer with translocation of ions across the membrane. The sequence is that of Ion-translocating oxidoreductase complex subunit E from Vibrio vulnificus (strain YJ016).